A 99-amino-acid polypeptide reads, in one-letter code: UPF0473 protein Athe_1150 (99 aa).

It belongs to the UPF0473 family.

In Caldicellulosiruptor bescii (strain ATCC BAA-1888 / DSM 6725 / KCTC 15123 / Z-1320) (Anaerocellum thermophilum), this protein is UPF0473 protein Athe_1150.